The following is a 453-amino-acid chain: Zinc finger CCCH domain-containing protein 26 (453 aa).

Residues 1–15 show a composition bias toward polar residues; that stretch reads MSETQQQVQNSTGSI. The segment at 1 to 47 is disordered; it reads MSETQQQVQNSTGSIRSPDKIEDTFRRMKVNEDNMEQSSPYPDRPGE. S2 carries the N-acetylserine modification. The span at 17-32 shows a compositional bias: basic and acidic residues; that stretch reads SPDKIEDTFRRMKVNE. C3H1-type zinc fingers lie at residues 44–72, 95–112, 129–157, 261–289, and 307–335; these read RPGERDCQFFLRTGQCGYGNSCRYNHPLT, ETGACKYGPTCKYHHPKD, RQGEKPCPYYMQTGLCRFGVACKFHHPHP, FSERAECRFFMNTGTCKYGDDCKYSHPKE, and RPGQPACGNFKAYGFCKFGANCKFDHSML. Positions 360-379 are enriched in polar residues; the sequence is STNLRISSPPSPSDMTTLSN. The disordered stretch occupies residues 360–453; that stretch reads STNLRISSPP…KVQDSSDKST (94 aa). Positions 391-407 are enriched in basic and acidic residues; the sequence is ETEKQDDSPTEPEKSEV. The segment covering 413–422 has biased composition (polar residues); it reads PNGSDSTSLP. Residues 441–453 are compositionally biased toward basic and acidic residues; it reads DSSKVQDSSDKST.

The protein localises to the nucleus. In Arabidopsis thaliana (Mouse-ear cress), this protein is Zinc finger CCCH domain-containing protein 26 (ZFN2).